The chain runs to 370 residues: Proline-rich protein 5-like (370 aa).

The residue at position 28 (S28) is a Phosphoserine. Positions 327–370 (PTFPPPHRQCSSEPSILDSPDEMELEDVASGSQEDSELNCASLS) are disordered.

The protein belongs to the PROTOR family. Interacts with the mammalian target of rapamycin complex 2 (mTORC2) which contains MTOR, MLST8, PRR5, RICTOR, MAPKAP1 and DEPTOR. Interacts with RFFL. Interacts (via C-terminus) with ZFP36 (via C-terminus); this interaction may accelerate ZFP36-mediated mRNA decay during stress. Interacts with RICTOR. Ubiquitinated. Ubiquitination by RFFL promotes proteasomal degradation of PRR5L thereby modifying the substrate-specific activity of the mTORC2 complex. Ubiquitination by RFFL is stimulated by LPA/lysophosphatidic acid.

Functionally, associates with the mTORC2 complex that regulates cellular processes including survival and organization of the cytoskeleton. Regulates the activity of the mTORC2 complex in a substrate-specific manner preventing for instance the specific phosphorylation of PKCs and thereby controlling cell migration. Plays a role in the stimulation of ZFP36-mediated mRNA decay of several ZFP36-associated mRNAs, such as TNF-alpha and GM-CSF, in response to stress. Required for ZFP36 localization to cytoplasmic stress granule (SG) and P-body (PB) in response to stress. This Rattus norvegicus (Rat) protein is Proline-rich protein 5-like (Prr5l).